A 224-amino-acid chain; its full sequence is 2-C-methyl-D-erythritol 4-phosphate cytidylyltransferase (224 aa).

It belongs to the IspD/TarI cytidylyltransferase family. IspD subfamily.

It catalyses the reaction 2-C-methyl-D-erythritol 4-phosphate + CTP + H(+) = 4-CDP-2-C-methyl-D-erythritol + diphosphate. It functions in the pathway isoprenoid biosynthesis; isopentenyl diphosphate biosynthesis via DXP pathway; isopentenyl diphosphate from 1-deoxy-D-xylulose 5-phosphate: step 2/6. Catalyzes the formation of 4-diphosphocytidyl-2-C-methyl-D-erythritol from CTP and 2-C-methyl-D-erythritol 4-phosphate (MEP). The polypeptide is 2-C-methyl-D-erythritol 4-phosphate cytidylyltransferase (Caldicellulosiruptor saccharolyticus (strain ATCC 43494 / DSM 8903 / Tp8T 6331)).